The primary structure comprises 508 residues: MTNTAPRELIRAIEHVPLTWWFLAVGGAWIVSKIIKILQTAYFSPLRKIPGPWYARLTSARLAWASFANNRIYYVQSLHDKYGSIVLIGPEEVDIADPVAAKQIHRMGSGFVKAPFYKLLSPGPVDNIFNFRDAKLHSTRRKLYAKGFTLNSLRQQWEPTIRNIVALTVERIRHDAQQGEAEILGWWTLMANETVCKLTFNGGHDTVRNGTKDPFVLMLERRMGDLAHLLQHFAPPLYYLGRLLGRAVPRLHDVFFSQETMFEAGKHVVAIARSARDAEGDRNLFVKALAAGDLESKIGGLNDTEIITDAGALLLAGSDPTALSLTYLIWCVLNRPKLQAELESEVAGLQGDITDAACADLPILNAVIYESLRLYGPAPGAMPRSPPPDGATLCGYYIPPSAVVVTQNWSLHGSPKVWKDPHTFDHTRWLPGSSLSEEAKISFNPFGQGARQCLGIHLGWMQLRLATALFFRRCPGAKLAPSTTPESMVMIDSFIAGMPKARRCAIQL.

Residues Leu18–Leu38 traverse the membrane as a helical segment. Asn192, Asn209, Asn302, and Asn408 each carry an N-linked (GlcNAc...) asparagine glycan. Cys453 provides a ligand contact to heme.

Belongs to the cytochrome P450 family. Requires heme as cofactor.

The protein resides in the membrane. The protein operates within mycotoxin biosynthesis; aflatoxin biosynthesis. Its function is as follows. Cytochrome P450 monooxygenase; part of the gene cluster that mediates the biosynthesis of aflatoxins, a group of polyketide-derived furanocoumarins, and part of the most toxic and carcinogenic compounds among the known mycotoxins. The four major aflatoxins produced by A.parasiticus are aflatoxin B1 (AFB1), aflatoxin B2 (AFB2), aflatoxin G1 (AFG1) and aflatoxin G2 (AFG2). The role of the cytochrome P450 monooxygenase aflV in aflatoxin biosynthesis has still to be characterized. The biosynthesis of aflatoxins begins with the norsolorinic acid synthase aflC that combines a hexanoyl starter unit produced by the fatty acid synthase aflA/aflB and 7 malonyl-CoA extender units to synthesize the precursor NOR. The second step is the conversion of NOR to averantin and requires the norsolorinic acid ketoreductase aflD, which catalyzes the dehydration of norsolorinic acid to form (1'S)-averantin. The norsolorinic acid reductases aflE and aflF may also play a role in the conversion of NOR to AVN. The cytochrome P450 monooxygenase aflG then catalyzes the hydroxylation of AVN to 5'hydroxyaverantin (HAVN). The next step is performed by the 5'-hydroxyaverantin dehydrogenase aflH that transforms HAVN to 5'-oxoaverantin (OAVN) which is further converted to averufin (AVF) by aflK that plays a dual role in the pathway, as a 5'-oxoaverantin cyclase that mediates conversion of 5'-oxoaverantin, as well as a versicolorin B synthase in a later step in the pathway. The averufin oxidase aflI catalyzes the conversion of AVF to versiconal hemiacetal acetate (VHA). VHA is then the substrate for the versiconal hemiacetal acetate esterase aflJ to yield versiconal (VAL). Versicolorin B synthase aflK then converts VAL to versicolorin B (VERB) by closing the bisfuran ring of aflatoxin which is required for DNA-binding, thus giving to aflatoxin its activity as a mutagen. Then, the activity of the versicolorin B desaturase aflL leads to versicolorin A (VERA). A branch point starts from VERB since it can also be converted to dihydrodemethylsterigmatocystin (DMDHST), probably also by aflL, VERA being a precursor for aflatoxins B1 and G1, and DMDHST for aflatoxins B2 and G2. Next, the versicolorin reductase aflM and the cytochrome P450 monooxygenase aflN are involved in conversion of VERA to demethylsterigmatocystin (DMST). AflX and aflY seem also involved in this step, through probable aflX-mediated epoxide ring-opening step following versicolorin A oxidation and aflY-mediated Baeyer-Villiger oxidation required for the formation of the xanthone ring. The methyltransferase aflO then leads to the modification of DMST to sterigmatocystin (ST), and of DMDHST to dihydrosterigmatocystin (DHST). Both ST and DHST are then substrates of the O-methyltransferase aflP to yield O-methylsterigmatocystin (OMST) and dihydro-O-methylsterigmatocystin (DHOMST), respectively. Finally OMST is converted to aflatoxins B1 and G1, and DHOMST to aflatoxins B2 and G2, via the action of several enzymes including O-methylsterigmatocystin oxidoreductase aflQ, the cytochrome P450 monooxygenase aflU, but also the NADH-dependent flavin oxidoreductase nadA which is specifically required for the synthesis of AFG1. The protein is Cytochrome P450 monooxygenase aflV of Aspergillus parasiticus (strain ATCC 56775 / NRRL 5862 / SRRC 143 / SU-1).